The chain runs to 138 residues: MAKPILRIGSRKNTRSSSRKNVRRIPKGVIHVQASFNNTIVTVTDVRGRVISWSSAGTCGFRGTRRGTPFAAQTAAGNAIRAVVDQGMQRAEVRIKGPGLGRDAALRAIRRSGILLSFVRDVTPMPHNGCRPPKKRRV.

The segment at M1–R23 is disordered. Positions G9–R23 are enriched in basic residues.

Belongs to the universal ribosomal protein uS11 family. As to quaternary structure, part of the 30S ribosomal subunit.

It localises to the plastid. The protein resides in the chloroplast. This Nasturtium officinale (Watercress) protein is Small ribosomal subunit protein uS11c.